Here is a 274-residue protein sequence, read N- to C-terminus: NAD kinase (274 aa).

Residue Asp59 is the Proton acceptor of the active site. NAD(+)-binding positions include Asp59 to Gly60, Asn133 to Asp134, Arg144, Asp163, Thr174 to Ser179, and Gln233.

The protein belongs to the NAD kinase family. It depends on a divalent metal cation as a cofactor.

The protein localises to the cytoplasm. The enzyme catalyses NAD(+) + ATP = ADP + NADP(+) + H(+). Functionally, involved in the regulation of the intracellular balance of NAD and NADP, and is a key enzyme in the biosynthesis of NADP. Catalyzes specifically the phosphorylation on 2'-hydroxyl of the adenosine moiety of NAD to yield NADP. This chain is NAD kinase, found in Aquifex aeolicus (strain VF5).